Here is a 306-residue protein sequence, read N- to C-terminus: tRNA pseudouridine synthase B (306 aa).

Residue aspartate 43 is the Nucleophile of the active site.

It belongs to the pseudouridine synthase TruB family. Type 1 subfamily.

It carries out the reaction uridine(55) in tRNA = pseudouridine(55) in tRNA. Responsible for synthesis of pseudouridine from uracil-55 in the psi GC loop of transfer RNAs. This Heliobacterium modesticaldum (strain ATCC 51547 / Ice1) protein is tRNA pseudouridine synthase B.